The sequence spans 379 residues: Carbamoyl phosphate synthase small chain (379 aa).

The interval 1–189 is CPSase; sequence MSKLALLVLE…GLPEAKDDSE (189 aa). L-glutamine-binding residues include Ser47, Gly241, and Gly243. The Glutamine amidotransferase type-1 domain occupies 193 to 379; that stretch reads HVVAYDFGAK…FIELIKKHSA (187 aa). The Nucleophile role is filled by Cys269. The L-glutamine site is built by Leu270, Gln273, Asn311, Gly313, and Phe314. Catalysis depends on residues His353 and Glu355.

The protein belongs to the CarA family. As to quaternary structure, composed of two chains; the small (or glutamine) chain promotes the hydrolysis of glutamine to ammonia, which is used by the large (or ammonia) chain to synthesize carbamoyl phosphate. Tetramer of heterodimers (alpha,beta)4.

The enzyme catalyses hydrogencarbonate + L-glutamine + 2 ATP + H2O = carbamoyl phosphate + L-glutamate + 2 ADP + phosphate + 2 H(+). It carries out the reaction L-glutamine + H2O = L-glutamate + NH4(+). It participates in amino-acid biosynthesis; L-arginine biosynthesis; carbamoyl phosphate from bicarbonate: step 1/1. It functions in the pathway pyrimidine metabolism; UMP biosynthesis via de novo pathway; (S)-dihydroorotate from bicarbonate: step 1/3. In terms of biological role, small subunit of the glutamine-dependent carbamoyl phosphate synthetase (CPSase). CPSase catalyzes the formation of carbamoyl phosphate from the ammonia moiety of glutamine, carbonate, and phosphate donated by ATP, constituting the first step of 2 biosynthetic pathways, one leading to arginine and/or urea and the other to pyrimidine nucleotides. The small subunit (glutamine amidotransferase) binds and cleaves glutamine to supply the large subunit with the substrate ammonia. The chain is Carbamoyl phosphate synthase small chain from Vibrio parahaemolyticus serotype O3:K6 (strain RIMD 2210633).